A 270-amino-acid polypeptide reads, in one-letter code: tRNA (guanine-N(1)-)-methyltransferase (270 aa).

S-adenosyl-L-methionine contacts are provided by residues glycine 113 and 133-138 (IGDYVL). Positions 251-270 (APTEGTGLIHHRDVEGPGEG) are disordered. Over residues 260–270 (HHRDVEGPGEG) the composition is skewed to basic and acidic residues.

The protein belongs to the RNA methyltransferase TrmD family. As to quaternary structure, homodimer.

It is found in the cytoplasm. It carries out the reaction guanosine(37) in tRNA + S-adenosyl-L-methionine = N(1)-methylguanosine(37) in tRNA + S-adenosyl-L-homocysteine + H(+). Its function is as follows. Specifically methylates guanosine-37 in various tRNAs. This is tRNA (guanine-N(1)-)-methyltransferase from Frankia casuarinae (strain DSM 45818 / CECT 9043 / HFP020203 / CcI3).